Here is a 76-residue protein sequence, read N- to C-terminus: MTDIVVVRVKPGSRKGPLVETGSDAELTIYVRERAVDGKANEAAARLLAAHLQLPRSRVELVAGATSRLKRFRVER.

Belongs to the UPF0235 family.

The chain is UPF0235 protein MMAR_2910 from Mycobacterium marinum (strain ATCC BAA-535 / M).